Reading from the N-terminus, the 191-residue chain is Auxin-responsive protein IAA32 (191 aa).

The EAR-like (transcriptional repression) motif lies at Leu-32–Leu-36. The PB1 domain maps to Tyr-98–Arg-184.

Belongs to the Aux/IAA family. In terms of assembly, homodimers and heterodimers.

It is found in the nucleus. Aux/IAA proteins are short-lived transcriptional factors that function as repressors of early auxin response genes at low auxin concentrations. Repression is thought to result from the interaction with auxin response factors (ARFs), proteins that bind to the auxin-responsive promoter element (AuxRE). Formation of heterodimers with ARF proteins may alter their ability to modulate early auxin response genes expression. The polypeptide is Auxin-responsive protein IAA32 (Arabidopsis thaliana (Mouse-ear cress)).